Here is a 528-residue protein sequence, read N- to C-terminus: GMP synthase [glutamine-hydrolyzing] (528 aa).

One can recognise a Glutamine amidotransferase type-1 domain in the interval 13–204 (SILILDFGSQ…VYKISCCTAD (192 aa)). Catalysis depends on Cys90, which acts as the Nucleophile. Active-site residues include His178 and Glu180. Residues 205–403 (WTTETYIEET…LGLPDEIIKR (199 aa)) enclose the GMPS ATP-PPase domain. 232–238 (SGGVDSS) serves as a coordination point for ATP.

As to quaternary structure, homodimer.

It carries out the reaction XMP + L-glutamine + ATP + H2O = GMP + L-glutamate + AMP + diphosphate + 2 H(+). It participates in purine metabolism; GMP biosynthesis; GMP from XMP (L-Gln route): step 1/1. Catalyzes the synthesis of GMP from XMP. This is GMP synthase [glutamine-hydrolyzing] from Prochlorococcus marinus (strain AS9601).